Here is a 317-residue protein sequence, read N- to C-terminus: Olfactory receptor 1082 (317 aa).

Over 1 to 26 (MESGNSTRRFSSFFLLGFTENPQLHF) the chain is Extracellular. Asn5 carries N-linked (GlcNAc...) asparagine glycosylation. A helical membrane pass occupies residues 27–51 (LIFALFLSMYLVTVLGNLLIIMAII). Residues 52 to 58 (TQSHLHT) are Cytoplasmic-facing. Residues 59–80 (PMYFFLANLSFVDICFTSTTIP) traverse the membrane as a helical segment. The Extracellular portion of the chain corresponds to 81-101 (KMLVNIYTQSKSITYEDCISQ). Residues Cys98 and Cys190 are joined by a disulfide bond. A helical membrane pass occupies residues 102 to 121 (MCVFLVFAELGNFLLAVMAY). Over 122-140 (DRYVAXCHPLCYTVIVNHR) the chain is Cytoplasmic. Residues 141 to 159 (LCILLLLLSWVISIFHAFI) form a helical membrane-spanning segment. Topologically, residues 160-197 (QSLIVLQLTFCGDVKIPHFFCELNQLSQLTCSDNFPSH) are extracellular. Residues 198-220 (LIMNLVPVMLAAISFSGILYSYF) traverse the membrane as a helical segment. Over 221 to 237 (KIVSSIHSISTVQGKYK) the chain is Cytoplasmic. Residues 238–261 (AFSTCASHLSIVSLFYSTGLGVYV) traverse the membrane as a helical segment. At 262 to 273 (SSAVVQSSHSAA) the chain is on the extracellular side. A helical transmembrane segment spans residues 274–293 (SASVMYTVVTPMLNPFIYSL). The Cytoplasmic segment spans residues 294–317 (RNKDVKRALERLLEGNCKVHHWTG).

It belongs to the G-protein coupled receptor 1 family. As to expression, olfactory epithelium.

It localises to the cell membrane. Odorant receptor. This chain is Olfactory receptor 1082 (Olr1082), found in Rattus norvegicus (Rat).